We begin with the raw amino-acid sequence, 310 residues long: tRNA pseudouridine synthase B (310 aa).

Catalysis depends on Asp-49, which acts as the Nucleophile.

The protein belongs to the pseudouridine synthase TruB family. Type 1 subfamily.

It carries out the reaction uridine(55) in tRNA = pseudouridine(55) in tRNA. In terms of biological role, responsible for synthesis of pseudouridine from uracil-55 in the psi GC loop of transfer RNAs. The sequence is that of tRNA pseudouridine synthase B from Rhizobium etli (strain ATCC 51251 / DSM 11541 / JCM 21823 / NBRC 15573 / CFN 42).